The primary structure comprises 275 residues: Diaminopimelate epimerase (275 aa).

N12, Q45, and N65 together coordinate substrate. The active-site Proton donor is C74. Residues 75-76 (GN), N158, N191, and 209-210 (ER) contribute to the substrate site. Residue C218 is the Proton acceptor of the active site. A substrate-binding site is contributed by 219-220 (GT).

Belongs to the diaminopimelate epimerase family. In terms of assembly, homodimer.

It is found in the cytoplasm. It catalyses the reaction (2S,6S)-2,6-diaminopimelate = meso-2,6-diaminopimelate. It functions in the pathway amino-acid biosynthesis; L-lysine biosynthesis via DAP pathway; DL-2,6-diaminopimelate from LL-2,6-diaminopimelate: step 1/1. Functionally, catalyzes the stereoinversion of LL-2,6-diaminopimelate (L,L-DAP) to meso-diaminopimelate (meso-DAP), a precursor of L-lysine and an essential component of the bacterial peptidoglycan. This is Diaminopimelate epimerase from Shewanella putrefaciens (strain CN-32 / ATCC BAA-453).